We begin with the raw amino-acid sequence, 735 residues long: MSNRRREFIEYIDSREPVEADIDISDKADRLTDIYDSDTYGLNAMRETLPSHCYKKIREVMQTGSALDPEIADMVANGMKEWAIKQGATHYCHWFLPLNGLAAEKHDSFISIFPGDDKVLLEFSGMQLIKGEPDASSFPSGGIRSTWEARGYTVWDATSPAFIRREKNGAILCIPTAFCSWTGEALDQKTPLLRSMEYVSNESIITLSSLFNEKHKRISPTLGIEQEFFLIDRKFYLARPDLVNCGRTLIGAKPPKGQEMEDHYFGTMNSRIISCIQEVEWKMWRLGMPLKTRHNEVAPGQYEVAPIFERANIAADHNMMLMDILKNVSTKHGLVCLFHEKPFAGVNGSGKHNNWSLSTDGGSNLLEPGHTPSQNARFILFLTAIIRAVDIHADLLRASVAVPGNEHRLGANEAPPAIISIYLGKELDTVINNIINNTDIQAPGSDDMDLGVVGFPPLPKDSTDRNRTSPFAFTGNKFEFRAVGSSQVVNFPCIVLNTIVAESLRFIREEILREMKVSSRQTAFNKIIKDTLIQHVRVVFNGDGYSGDWKELAKSRGLANLPSTPEALTNINSEKNIKLFSESNILSPVELESRQEILFEIYNKSIKIEANSLYDLVSTLVLPACFAHQKNIAESVNSIMPFIQSQKSFSQPNHQYSHLSEVVESVNLLIEANQKLLALIKQTKDFNSEHSLATFLNQSVIPQMNEVRKFSDHLEGIVEDKSWPVPKYSEILFLR.

Residues 89–183 (THYCHWFLPL…IPTAFCSWTG (95 aa)) enclose the GS beta-grasp domain. The 434-residue stretch at 188 to 621 (QKTPLLRSME…SLYDLVSTLV (434 aa)) folds into the GS catalytic domain.

The protein belongs to the glutamine synthetase family. Type 3 subfamily. As to quaternary structure, homohexamer.

The enzyme catalyses L-glutamate + NH4(+) + ATP = L-glutamine + ADP + phosphate + H(+). In Dictyostelium discoideum (Social amoeba), this protein is Type-3 glutamine synthetase (glnA3).